The following is a 223-amino-acid chain: Probable transaldolase (223 aa).

The active-site Schiff-base intermediate with substrate is the lysine 91.

The protein belongs to the transaldolase family. Type 3B subfamily.

It localises to the cytoplasm. The enzyme catalyses D-sedoheptulose 7-phosphate + D-glyceraldehyde 3-phosphate = D-erythrose 4-phosphate + beta-D-fructose 6-phosphate. Its pathway is carbohydrate degradation; pentose phosphate pathway; D-glyceraldehyde 3-phosphate and beta-D-fructose 6-phosphate from D-ribose 5-phosphate and D-xylulose 5-phosphate (non-oxidative stage): step 2/3. Transaldolase is important for the balance of metabolites in the pentose-phosphate pathway. The chain is Probable transaldolase from Chlorobium phaeobacteroides (strain BS1).